Here is a 395-residue protein sequence, read N- to C-terminus: Cytochrome b561 and DOMON domain-containing protein At5g47530 (395 aa).

The N-terminal stretch at 1–24 is a signal peptide; the sequence is MAISSNLLLCLSLFIFIITKSALA. Residues 47 to 162 form the DOMON domain; it reads LDSFLHYTYD…GIINTVWQDG (116 aa). The Cytochrome b561 domain maps to 176-371; that stretch reads GNNVRSVSTL…LEGFTWYVVI (196 aa). A run of 2 helical transmembrane segments spans residues 210-230 and 242-262; these read IHGI…AIIA and AWFY…VAGW. The heme b site is built by H211, H247, and H280. Residues 282-302 form a helical membrane-spanning segment; sequence AVGIALFCLATIQVFAMFLRP. A heme b-binding site is contributed by H316. 2 helical membrane-spanning segments follow: residues 318–338 and 351–371; these read TVGY…LDIL and IIVV…YVVI.

The cofactor is heme b.

It is found in the membrane. Functionally, may act as a catecholamine-responsive trans-membrane electron transporter. This chain is Cytochrome b561 and DOMON domain-containing protein At5g47530, found in Arabidopsis thaliana (Mouse-ear cress).